The sequence spans 1517 residues: DNA-directed RNA polymerase subunit beta' (1517 aa).

Residues Cys-71, Cys-73, Cys-86, and Cys-89 each coordinate Zn(2+). The Mg(2+) site is built by Asp-482, Asp-484, and Asp-486. Zn(2+)-binding residues include Cys-812, Cys-886, Cys-893, and Cys-896.

It belongs to the RNA polymerase beta' chain family. As to quaternary structure, the RNAP catalytic core consists of 2 alpha, 1 beta, 1 beta' and 1 omega subunit. When a sigma factor is associated with the core the holoenzyme is formed, which can initiate transcription. It depends on Mg(2+) as a cofactor. Zn(2+) is required as a cofactor.

The enzyme catalyses RNA(n) + a ribonucleoside 5'-triphosphate = RNA(n+1) + diphosphate. In terms of biological role, DNA-dependent RNA polymerase catalyzes the transcription of DNA into RNA using the four ribonucleoside triphosphates as substrates. The protein is DNA-directed RNA polymerase subunit beta' of Campylobacter jejuni subsp. jejuni serotype O:2 (strain ATCC 700819 / NCTC 11168).